We begin with the raw amino-acid sequence, 309 residues long: Foldase protein PrsA 2 (309 aa).

Positions Met-1–Ala-22 are cleaved as a signal peptide. Cys-23 carries the N-palmitoyl cysteine lipid modification. A lipid anchor (S-diacylglycerol cysteine) is attached at Cys-23. The PpiC domain maps to Thr-146 to Lys-241.

Belongs to the PrsA family.

Its subcellular location is the cell membrane. It carries out the reaction [protein]-peptidylproline (omega=180) = [protein]-peptidylproline (omega=0). Plays a major role in protein secretion by helping the post-translocational extracellular folding of several secreted proteins. This is Foldase protein PrsA 2 (prsA2) from Streptococcus pyogenes serotype M3 (strain ATCC BAA-595 / MGAS315).